Here is a 429-residue protein sequence, read N- to C-terminus: 3-phosphoshikimate 1-carboxyvinyltransferase (429 aa).

Residues Lys-23, Ser-24, and Arg-28 each contribute to the 3-phosphoshikimate site. Residue Lys-23 coordinates phosphoenolpyruvate. Positions 95 and 123 each coordinate phosphoenolpyruvate. Ser-168, Gln-170, Asp-316, and Lys-343 together coordinate 3-phosphoshikimate. Gln-170 provides a ligand contact to phosphoenolpyruvate. Residue Asp-316 is the Proton acceptor of the active site. Positions 347 and 389 each coordinate phosphoenolpyruvate.

It belongs to the EPSP synthase family. As to quaternary structure, monomer.

The protein localises to the cytoplasm. It carries out the reaction 3-phosphoshikimate + phosphoenolpyruvate = 5-O-(1-carboxyvinyl)-3-phosphoshikimate + phosphate. Its pathway is metabolic intermediate biosynthesis; chorismate biosynthesis; chorismate from D-erythrose 4-phosphate and phosphoenolpyruvate: step 6/7. Its function is as follows. Catalyzes the transfer of the enolpyruvyl moiety of phosphoenolpyruvate (PEP) to the 5-hydroxyl of shikimate-3-phosphate (S3P) to produce enolpyruvyl shikimate-3-phosphate and inorganic phosphate. The protein is 3-phosphoshikimate 1-carboxyvinyltransferase of Bacillus thuringiensis subsp. konkukian (strain 97-27).